Reading from the N-terminus, the 75-residue chain is Mu-conotoxin GIIIA (75 aa).

The first 20 residues, 1 to 20 (MMSKLGVLLTICLLLFPLTA), serve as a signal peptide directing secretion. A propeptide spanning residues 21 to 51 (LPMDGDEPANRPVERMQDNISSEQYPLFEKR) is cleaved from the precursor. 3 disulfides stabilise this stretch: C54/C66, C55/C71, and C61/C72. P57 and P58 each carry 4-hydroxyproline; partial. P68 is subject to 4-hydroxyproline. An Alanine amide modification is found at A73.

This sequence belongs to the conotoxin M superfamily. Post-translationally, hydroxylated; hydroxylations improve the ability to block Nav1.4/SCN4A sodium channels but does not affect folding. Expressed by the venom duct.

It is found in the secreted. Its function is as follows. Mu-conotoxins block voltage-gated sodium channels (Nav). This toxin potently blocks rat Nav1.4/SCN4A (IC(50)= 19-110 nM). It also moderately blocks rNav1.1/SCN1A (Kd=260 nM), rNav1.2/SCN2A (IC(50)=2.7-17.8 uM), and mNav1.6/SCN8A (IC(50)=680 nM). The inhibition is reversible. In vivo, induces paralysis to an isolated skeletal muscle preparation from frog (cutaneous pectoralis) within a few minutes. The polypeptide is Mu-conotoxin GIIIA (Conus geographus (Geography cone)).